The primary structure comprises 493 residues: Ketol-acid reductoisomerase (NADP(+)) (493 aa).

A KARI N-terminal Rossmann domain is found at Leu-14–Ser-208. Residues Cys-45–Gln-48, Arg-68, Arg-76, Ser-78, and Asp-108–Gln-110 contribute to the NADP(+) site. Residue His-132 is part of the active site. An NADP(+)-binding site is contributed by Gly-158. 2 KARI C-terminal knotted domains span residues Ser-209–Ala-345 and Asp-346–Met-486. 4 residues coordinate Mg(2+): Asp-217, Glu-221, Glu-390, and Glu-394. Ser-415 lines the substrate pocket.

It belongs to the ketol-acid reductoisomerase family. Mg(2+) serves as cofactor.

The enzyme catalyses (2R)-2,3-dihydroxy-3-methylbutanoate + NADP(+) = (2S)-2-acetolactate + NADPH + H(+). It carries out the reaction (2R,3R)-2,3-dihydroxy-3-methylpentanoate + NADP(+) = (S)-2-ethyl-2-hydroxy-3-oxobutanoate + NADPH + H(+). The protein operates within amino-acid biosynthesis; L-isoleucine biosynthesis; L-isoleucine from 2-oxobutanoate: step 2/4. It participates in amino-acid biosynthesis; L-valine biosynthesis; L-valine from pyruvate: step 2/4. Involved in the biosynthesis of branched-chain amino acids (BCAA). Catalyzes an alkyl-migration followed by a ketol-acid reduction of (S)-2-acetolactate (S2AL) to yield (R)-2,3-dihydroxy-isovalerate. In the isomerase reaction, S2AL is rearranged via a Mg-dependent methyl migration to produce 3-hydroxy-3-methyl-2-ketobutyrate (HMKB). In the reductase reaction, this 2-ketoacid undergoes a metal-dependent reduction by NADPH to yield (R)-2,3-dihydroxy-isovalerate. The sequence is that of Ketol-acid reductoisomerase (NADP(+)) from Actinobacillus pleuropneumoniae serotype 3 (strain JL03).